Here is a 333-residue protein sequence, read N- to C-terminus: Nucleoid-associated protein YE1421 (333 aa).

This sequence belongs to the YejK family.

Its subcellular location is the cytoplasm. It localises to the nucleoid. This is Nucleoid-associated protein YE1421 from Yersinia enterocolitica serotype O:8 / biotype 1B (strain NCTC 13174 / 8081).